The sequence spans 212 residues: MSTLSVVIKDITPEQVAIISQGLVAGVDEVGRGPLIGDVVTAAVILDPNKPIVGLNDSKKLSEKRRNALYQQIMDNALSVSVGRASPAEIDELNILHATMLAMQRAVAGLSILPERVLVDGNRVPDFGIASHAIIKGDGLVAAISAASIIAKVTRDAEMDTLDSQYPQYGFAKHKGYPTKAHFEALALYGVLPDHRKSFKPVADRILLQNTF.

Positions 22 to 211 constitute an RNase H type-2 domain; the sequence is GLVAGVDEVG…VADRILLQNT (190 aa). The a divalent metal cation site is built by aspartate 28, glutamate 29, and aspartate 120.

Belongs to the RNase HII family. The cofactor is Mn(2+). Mg(2+) is required as a cofactor.

The protein localises to the cytoplasm. The enzyme catalyses Endonucleolytic cleavage to 5'-phosphomonoester.. Functionally, endonuclease that specifically degrades the RNA of RNA-DNA hybrids. The polypeptide is Ribonuclease HII (Shewanella frigidimarina (strain NCIMB 400)).